The chain runs to 238 residues: DnaA regulatory inactivator Hda (238 aa).

This sequence belongs to the DnaA family. HdA subfamily. As to quaternary structure, the active form seems to be an ADP-bound monomer. Forms the RIDA complex (regulatory inactivation of DnaA) of ATP-DnaA, ADP-Hda and the DNA-loaded beta sliding clamp (dnaN).

Its function is as follows. Mediates the interaction of DNA replication initiator protein DnaA with DNA polymerase subunit beta sliding clamp (dnaN). Stimulates hydrolysis of ATP-DnaA to ADP-DnaA, rendering DnaA inactive for reinitiation, a process called regulatory inhibition of DnaA or RIDA. The polypeptide is DnaA regulatory inactivator Hda (Pectobacterium atrosepticum (strain SCRI 1043 / ATCC BAA-672) (Erwinia carotovora subsp. atroseptica)).